Here is a 246-residue protein sequence, read N- to C-terminus: Cytochrome c oxidase subunit 2 (246 aa).

2 helical membrane-spanning segments follow: residues 31–51 (HMMYYLALMLGLVSYMLYVMM) and 72–92 (IMWTMFPAVMLLLMAFPSFML). Residues H175, C210, E212, C214, H218, and M221 each contribute to the Cu cation site. A Mg(2+)-binding site is contributed by E212.

The protein belongs to the cytochrome c oxidase subunit 2 family. In terms of assembly, component of the cytochrome c oxidase (complex IV, CIV), a multisubunit enzyme composed of a catalytic core of 3 subunits and several supernumerary subunits. The complex exists as a monomer or a dimer and forms supercomplexes (SCs) in the inner mitochondrial membrane with ubiquinol-cytochrome c oxidoreductase (cytochrome b-c1 complex, complex III, CIII). It depends on Cu cation as a cofactor.

The protein resides in the mitochondrion inner membrane. It catalyses the reaction 4 Fe(II)-[cytochrome c] + O2 + 8 H(+)(in) = 4 Fe(III)-[cytochrome c] + 2 H2O + 4 H(+)(out). Functionally, component of the cytochrome c oxidase, the last enzyme in the mitochondrial electron transport chain which drives oxidative phosphorylation. The respiratory chain contains 3 multisubunit complexes succinate dehydrogenase (complex II, CII), ubiquinol-cytochrome c oxidoreductase (cytochrome b-c1 complex, complex III, CIII) and cytochrome c oxidase (complex IV, CIV), that cooperate to transfer electrons derived from NADH and succinate to molecular oxygen, creating an electrochemical gradient over the inner membrane that drives transmembrane transport and the ATP synthase. Cytochrome c oxidase is the component of the respiratory chain that catalyzes the reduction of oxygen to water. Electrons originating from reduced cytochrome c in the intermembrane space (IMS) are transferred via the dinuclear copper A center (CU(A)) of subunit 2 and heme A of subunit 1 to the active site in subunit 1, a binuclear center (BNC) formed by heme A3 and copper B (CU(B)). The BNC reduces molecular oxygen to 2 water molecules using 4 electrons from cytochrome c in the IMS and 4 protons from the mitochondrial matrix. The protein is Cytochrome c oxidase subunit 2 (COX2) of Debaryomyces hansenii (strain ATCC 36239 / CBS 767 / BCRC 21394 / JCM 1990 / NBRC 0083 / IGC 2968) (Yeast).